The chain runs to 102 residues: uncharacterized protein (102 aa).

The next 2 membrane-spanning stretches (helical) occupy residues 28 to 48 and 81 to 101; these read YLNLLLILEAILCPVDSLISI and LSVLYLDLCCSGLIIAEAGIG.

Its subcellular location is the membrane. This is an uncharacterized protein from Saccharomyces cerevisiae (strain ATCC 204508 / S288c) (Baker's yeast).